We begin with the raw amino-acid sequence, 158 residues long: Transcription elongation factor GreA (158 aa).

Residues 53-73 (EQQGMVEARIRDIEAKLSNAQ) adopt a coiled-coil conformation.

Belongs to the GreA/GreB family.

In terms of biological role, necessary for efficient RNA polymerase transcription elongation past template-encoded arresting sites. The arresting sites in DNA have the property of trapping a certain fraction of elongating RNA polymerases that pass through, resulting in locked ternary complexes. Cleavage of the nascent transcript by cleavage factors such as GreA or GreB allows the resumption of elongation from the new 3'terminus. GreA releases sequences of 2 to 3 nucleotides. The sequence is that of Transcription elongation factor GreA from Pseudomonas aeruginosa (strain ATCC 15692 / DSM 22644 / CIP 104116 / JCM 14847 / LMG 12228 / 1C / PRS 101 / PAO1).